A 445-amino-acid polypeptide reads, in one-letter code: UDP-N-acetylmuramoylalanine--D-glutamate ligase (445 aa).

Residue 117–123 (GSNGKTT) participates in ATP binding.

Belongs to the MurCDEF family.

The protein resides in the cytoplasm. The enzyme catalyses UDP-N-acetyl-alpha-D-muramoyl-L-alanine + D-glutamate + ATP = UDP-N-acetyl-alpha-D-muramoyl-L-alanyl-D-glutamate + ADP + phosphate + H(+). Its pathway is cell wall biogenesis; peptidoglycan biosynthesis. Cell wall formation. Catalyzes the addition of glutamate to the nucleotide precursor UDP-N-acetylmuramoyl-L-alanine (UMA). In Neisseria meningitidis serogroup C (strain 053442), this protein is UDP-N-acetylmuramoylalanine--D-glutamate ligase.